Here is a 42-residue protein sequence, read N- to C-terminus: Photosystem II reaction center protein J (42 aa).

Residues 10-30 form a helical membrane-spanning segment; it reads IPLWLVGTVAGTAALTLVAVF.

It belongs to the PsbJ family. As to quaternary structure, PSII is composed of 1 copy each of membrane proteins PsbA, PsbB, PsbC, PsbD, PsbE, PsbF, PsbH, PsbI, PsbJ, PsbK, PsbL, PsbM, PsbT, PsbX, PsbY, PsbZ, Psb30/Ycf12, at least 3 peripheral proteins of the oxygen-evolving complex and a large number of cofactors. It forms dimeric complexes.

It localises to the plastid. It is found in the chloroplast thylakoid membrane. Functionally, one of the components of the core complex of photosystem II (PSII). PSII is a light-driven water:plastoquinone oxidoreductase that uses light energy to abstract electrons from H(2)O, generating O(2) and a proton gradient subsequently used for ATP formation. It consists of a core antenna complex that captures photons, and an electron transfer chain that converts photonic excitation into a charge separation. The polypeptide is Photosystem II reaction center protein J (Chlorella vulgaris (Green alga)).